The sequence spans 180 residues: Large ribosomal subunit protein uL16 (180 aa).

It belongs to the universal ribosomal protein uL16 family.

The chain is Large ribosomal subunit protein uL16 from Thermococcus sibiricus (strain DSM 12597 / MM 739).